The chain runs to 249 residues: Transcription factor MYB90 (249 aa).

HTH myb-type domains follow at residues 5–57 (SKGL…LNYL) and 58–112 (KPSI…SKKH). 2 DNA-binding regions (H-T-H motif) span residues 33 to 57 (WHQV…LNYL) and 85 to 108 (WSLI…NTHL).

Interacts with BHLH12/MYC1, BHLH1/GL3/MYC6, BHLH2/EGL3/MYC146, and BHLH42/TT8. In terms of tissue distribution, expressed only in leaves and siliques.

The protein resides in the nucleus. Its function is as follows. Transcription activator, when associated with BHLH12/MYC1, EGL3, or GL3. Promotes the synthesis of phenylpropanoid-derived compounds such as anthocyanins. This Arabidopsis thaliana (Mouse-ear cress) protein is Transcription factor MYB90 (MYB90).